The primary structure comprises 479 residues: Something about silencing protein 10 (479 aa).

Residues 1–10 are compositionally biased toward basic residues; it reads MVGRSRRRGA. Disordered regions lie at residues 1 to 45 and 62 to 166; these read MVGR…SYYQ and KGWN…EEAQ. Arginine 8 is subject to Omega-N-methylarginine. Low complexity predominate over residues 11–21; sequence AKWAAVRAKAG. Serine 37 carries the post-translational modification Phosphoserine. Residues 69–111 show a composition bias toward acidic residues; the sequence is SGDEEDGEEEEEEVLALDMDDEDDEDGGNAGEEEEEENADDDG. Lysine 144 is subject to N6-acetyllysine; alternate. Lysine 144 is covalently cross-linked (Glycyl lysine isopeptide (Lys-Gly) (interchain with G-Cter in SUMO2); alternate). Residue serine 150 is modified to Phosphoserine. Residues 153 to 165 are compositionally biased toward acidic residues; it reads EAEEEEREEEEEA. Phosphothreonine is present on threonine 362. Phosphoserine is present on residues serine 365 and serine 368. A Citrulline modification is found at arginine 385. The segment at 419–466 is disordered; it reads RGLTPRRKKIDRNPRVKHREKFRRAKIRRRGQVREVRKEEQRYSGELS. The span at 422–449 shows a compositional bias: basic residues; that stretch reads TPRRKKIDRNPRVKHREKFRRAKIRRRG. Over residues 450-461 the composition is skewed to basic and acidic residues; sequence QVREVRKEEQRY.

It belongs to the SAS10 family. Part of the small subunit (SSU) processome, composed of more than 70 proteins and the RNA chaperone small nucleolar RNA (snoRNA) U3. Post-translationally, citrullinated by PADI4.

Its subcellular location is the nucleus. It localises to the nucleolus. Its function is as follows. Essential for gene silencing: has a role in the structure of silenced chromatin. Plays a role in the developing brain. Part of the small subunit (SSU) processome, first precursor of the small eukaryotic ribosomal subunit. During the assembly of the SSU processome in the nucleolus, many ribosome biogenesis factors, an RNA chaperone and ribosomal proteins associate with the nascent pre-rRNA and work in concert to generate RNA folding, modifications, rearrangements and cleavage as well as targeted degradation of pre-ribosomal RNA by the RNA exosome. The polypeptide is Something about silencing protein 10 (Homo sapiens (Human)).